The primary structure comprises 1288 residues: Vacuolating cytotoxin autotransporter (1288 aa).

A signal peptide spans 1–33; the sequence is MEIQQTHRKINRPLVSLVLAGALISAIPQESHA. The interval 326 to 377 is disordered; it reads PPEGGYKDKPNSTTSQSGTKNDKKEISQNNNSNTEVINPPNNTQKTETEPTQ. A compositionally biased stretch (polar residues) spans 352 to 376; the sequence is SQNNNSNTEVINPPNNTQKTETEPT. The region spanning 1015-1288 is the Autotransporter domain; it reads KYEKPTNVWA…ASNLGMRYSF (274 aa).

It is found in the periplasm. It localises to the secreted. The protein resides in the cell surface. The protein localises to the cell outer membrane. Its function is as follows. Induces vacuolation of eukaryotic cells. Causes ulceration and gastric lesions. In Helicobacter pylori (strain J99 / ATCC 700824) (Campylobacter pylori J99), this protein is Vacuolating cytotoxin autotransporter (vacA).